We begin with the raw amino-acid sequence, 63 residues long: Cecropin-A1 (63 aa).

An N-terminal signal peptide occupies residues 1 to 23 (MNFYNIFVFVALILAITIGQSEA). At Arg62 the chain carries Arginine amide.

This sequence belongs to the cecropin family.

The protein localises to the secreted. Functionally, cecropins have lytic and antibacterial activity against several Gram-positive and Gram-negative bacteria. The sequence is that of Cecropin-A1 (CecA1) from Drosophila sechellia (Fruit fly).